A 645-amino-acid polypeptide reads, in one-letter code: 1,4-alpha-glucan branching enzyme GlgB (645 aa).

Residue aspartate 309 is the Nucleophile of the active site. Glutamate 352 (proton donor) is an active-site residue. The interval valine 619–arginine 645 is disordered. Over residues arginine 636–arginine 645 the composition is skewed to polar residues.

The protein belongs to the glycosyl hydrolase 13 family. GlgB subfamily. Monomer.

The enzyme catalyses Transfers a segment of a (1-&gt;4)-alpha-D-glucan chain to a primary hydroxy group in a similar glucan chain.. Its pathway is glycan biosynthesis; glycogen biosynthesis. Catalyzes the formation of the alpha-1,6-glucosidic linkages in glycogen by scission of a 1,4-alpha-linked oligosaccharide from growing alpha-1,4-glucan chains and the subsequent attachment of the oligosaccharide to the alpha-1,6 position. This is 1,4-alpha-glucan branching enzyme GlgB from Bacillus cereus (strain G9842).